Here is a 148-residue protein sequence, read N- to C-terminus: 3-dehydroquinate dehydratase (148 aa).

Tyr23 serves as the catalytic Proton acceptor. The substrate site is built by Asn75, His81, and Asp88. The active-site Proton donor is the His101. Residues 102-103 (MS) and Arg112 contribute to the substrate site.

It belongs to the type-II 3-dehydroquinase family. Homododecamer.

It carries out the reaction 3-dehydroquinate = 3-dehydroshikimate + H2O. It participates in metabolic intermediate biosynthesis; chorismate biosynthesis; chorismate from D-erythrose 4-phosphate and phosphoenolpyruvate: step 3/7. Catalyzes a trans-dehydration via an enolate intermediate. This Syntrophotalea carbinolica (strain DSM 2380 / NBRC 103641 / GraBd1) (Pelobacter carbinolicus) protein is 3-dehydroquinate dehydratase.